The primary structure comprises 420 residues: UDP-N-acetylglucosamine 1-carboxyvinyltransferase (420 aa).

Phosphoenolpyruvate is bound at residue 22–23 (KN). Arginine 94 lines the UDP-N-acetyl-alpha-D-glucosamine pocket. The active-site Proton donor is the cysteine 118. Cysteine 118 is subject to 2-(S-cysteinyl)pyruvic acid O-phosphothioketal. The UDP-N-acetyl-alpha-D-glucosamine site is built by aspartate 307 and isoleucine 329.

The protein belongs to the EPSP synthase family. MurA subfamily.

It localises to the cytoplasm. It catalyses the reaction phosphoenolpyruvate + UDP-N-acetyl-alpha-D-glucosamine = UDP-N-acetyl-3-O-(1-carboxyvinyl)-alpha-D-glucosamine + phosphate. It functions in the pathway cell wall biogenesis; peptidoglycan biosynthesis. Cell wall formation. Adds enolpyruvyl to UDP-N-acetylglucosamine. The protein is UDP-N-acetylglucosamine 1-carboxyvinyltransferase of Granulibacter bethesdensis (strain ATCC BAA-1260 / CGDNIH1).